We begin with the raw amino-acid sequence, 333 residues long: Fe(3+)-citrate import system permease protein YfmE (333 aa).

The next 8 helical transmembrane spans lie at 12–32 (LLAILILAVILIVLSVISIGI), 65–85 (IILAILAGAGLAAAGAILQGV), 95–115 (VVGISKGSGLAAMAVILIFPE), 120–140 (VLPFSAFAGAAIIAVLLLMIA), 194–214 (EVKLLAPWLLILFPIVCILIP), 238–258 (FILIFTAVALAGSCVAVVGSI), 279–299 (YLLPASALIGAIILLIADTLG), and 306–326 (VEIPAGILTAVIGAPYFLYLL).

This sequence belongs to the binding-protein-dependent transport system permease family. FecCD subfamily. As to quaternary structure, the complex is composed of one ATP-binding protein (YfmF), two transmembrane proteins (YfmD and YfmE) and a solute-binding protein (YfmC).

It is found in the cell membrane. In terms of biological role, part of the ABC transporter complex YfmCDEF involved in citrate-dependent Fe(3+) import. Involved in the translocation of the substrate across the membrane. The polypeptide is Fe(3+)-citrate import system permease protein YfmE (yfmE) (Bacillus subtilis (strain 168)).